The following is a 359-amino-acid chain: Phospho-N-acetylmuramoyl-pentapeptide-transferase (359 aa).

Transmembrane regions (helical) follow at residues 3-23 (QILI…PALI), 55-75 (VAII…GLAF), 80-100 (ISAS…VGFL), 117-137 (TAKT…ALGF), 156-176 (IATV…VVSA), 187-207 (LDGL…LITF), 231-251 (LAIV…WNAA), 255-275 (IFMG…ISVT), 280-300 (ILAV…VLQI), and 334-354 (FWLL…GEWL).

It belongs to the glycosyltransferase 4 family. MraY subfamily. Mg(2+) is required as a cofactor.

The protein resides in the cell membrane. The enzyme catalyses UDP-N-acetyl-alpha-D-muramoyl-L-alanyl-gamma-D-glutamyl-meso-2,6-diaminopimeloyl-D-alanyl-D-alanine + di-trans,octa-cis-undecaprenyl phosphate = di-trans,octa-cis-undecaprenyl diphospho-N-acetyl-alpha-D-muramoyl-L-alanyl-D-glutamyl-meso-2,6-diaminopimeloyl-D-alanyl-D-alanine + UMP. Its pathway is cell wall biogenesis; peptidoglycan biosynthesis. In terms of biological role, catalyzes the initial step of the lipid cycle reactions in the biosynthesis of the cell wall peptidoglycan: transfers peptidoglycan precursor phospho-MurNAc-pentapeptide from UDP-MurNAc-pentapeptide onto the lipid carrier undecaprenyl phosphate, yielding undecaprenyl-pyrophosphoryl-MurNAc-pentapeptide, known as lipid I. The chain is Phospho-N-acetylmuramoyl-pentapeptide-transferase from Mycobacterium avium (strain 104).